The chain runs to 279 residues: uncharacterized protein (279 aa).

It belongs to the peptidase C59 family.

This is an uncharacterized protein from Chlorella (PBCV-1).